Consider the following 445-residue polypeptide: NAD-specific glutamate dehydrogenase (445 aa).

Lysine 124 is an active-site residue. 235–241 (GFGNVAW) provides a ligand contact to NAD(+).

It belongs to the Glu/Leu/Phe/Val dehydrogenases family. In terms of assembly, homohexamer.

The catalysed reaction is L-glutamate + NAD(+) + H2O = 2-oxoglutarate + NH4(+) + NADH + H(+). The sequence is that of NAD-specific glutamate dehydrogenase (gdhB) from Bacteroides fragilis (strain YCH46).